Reading from the N-terminus, the 181-residue chain is Adenine phosphoribosyltransferase 2 (181 aa).

The residue at position 2 (Ser-2) is an N-acetylserine.

Belongs to the purine/pyrimidine phosphoribosyltransferase family.

The protein localises to the cytoplasm. The catalysed reaction is AMP + diphosphate = 5-phospho-alpha-D-ribose 1-diphosphate + adenine. Its pathway is purine metabolism; AMP biosynthesis via salvage pathway; AMP from adenine: step 1/1. In terms of biological role, catalyzes a salvage reaction resulting in the formation of AMP, that is energically less costly than de novo synthesis. May lack catalytic activity. This chain is Adenine phosphoribosyltransferase 2 (APT2), found in Saccharomyces cerevisiae (strain ATCC 204508 / S288c) (Baker's yeast).